Here is a 430-residue protein sequence, read N- to C-terminus: MKTPIHPTRLVLEENGDFHKSPKGMLFMDPLNGQFTDLSGVRILRCGVDTVRQLYNGKLRPEVMALFDLSVDVVEFAGYEWSKGRIGRDSGYQYRLQNAEMGLILLIKNHNIKVDTIGSHLKIEVSPHAIDGADPRILQGVLDDLAAAVLSHCETNQAAVHIALDVQGWTPPADLVDRMHCRSRRVRQISGIERIEFDGNASVYGRGETYMFGSANGLQLSIYNKTLQARATDKLDYWESVWATLNGDPFGDGDPAYNPLETVWRIEFRYHHSIVQQFSEGSRMASGEVIGCRTYEGLCPHLQGLWNYACEAFRVLSREGMYDAFWSLISLDARVQVECDPLIERTEYRRYYKTAKGFSGRNCEMFLGQFVSLIARERVPAKKAIESARKLEFWHVIEDHYLAKGWTRRDLERHIHKLMCDRYLRKGYAI.

Residues 207 to 223 (GETYMFGSANGLQLSIY) traverse the membrane as a helical segment.

The protein localises to the host membrane. Functionally, may play a role in phage assembly. This is an uncharacterized protein from Pseudomonas phage Pf1 (Bacteriophage Pf1).